The primary structure comprises 142 residues: Hemoglobin subunit alpha-B (142 aa).

Residues 2–142 (VLSPTDKSNV…VSTVLTSKYR (141 aa)) form the Globin domain. Histidine 59 provides a ligand contact to O2. Histidine 88 serves as a coordination point for heme b.

Belongs to the globin family. In terms of assembly, heterotetramer of two alpha chains and two beta chains. As to expression, red blood cells.

Functionally, involved in oxygen transport from the lung to the various peripheral tissues. This is Hemoglobin subunit alpha-B (HBAB) from Otolemur crassicaudatus (Brown greater galago).